A 620-amino-acid chain; its full sequence is 1-deoxy-D-xylulose-5-phosphate synthase (620 aa).

Thiamine diphosphate contacts are provided by residues His-80 and 121–123 (GHS). Position 152 (Asp-152) interacts with Mg(2+). Thiamine diphosphate contacts are provided by residues 153-154 (GA), Asn-181, Tyr-288, and Glu-370. Asn-181 is a Mg(2+) binding site.

The protein belongs to the transketolase family. DXPS subfamily. As to quaternary structure, homodimer. Mg(2+) is required as a cofactor. Thiamine diphosphate serves as cofactor.

The catalysed reaction is D-glyceraldehyde 3-phosphate + pyruvate + H(+) = 1-deoxy-D-xylulose 5-phosphate + CO2. It participates in metabolic intermediate biosynthesis; 1-deoxy-D-xylulose 5-phosphate biosynthesis; 1-deoxy-D-xylulose 5-phosphate from D-glyceraldehyde 3-phosphate and pyruvate: step 1/1. In terms of biological role, catalyzes the acyloin condensation reaction between C atoms 2 and 3 of pyruvate and glyceraldehyde 3-phosphate to yield 1-deoxy-D-xylulose-5-phosphate (DXP). This chain is 1-deoxy-D-xylulose-5-phosphate synthase, found in Shigella flexneri.